Consider the following 191-residue polypeptide: Small ribosomal subunit protein uS4A (191 aa).

Ser50 and Ser161 each carry phosphoserine. The S4 RNA-binding domain occupies 107 to 181; it reads RRLQTQVFKL…CKRKRLRSQE (75 aa). At Tyr164 the chain carries Phosphotyrosine. Positions 166–191 are disordered; the sequence is GGRPGRCKRKRLRSQEGGEGEEAEEE. Ser179 carries the phosphoserine modification.

This sequence belongs to the universal ribosomal protein uS4 family. In terms of assembly, component of the small ribosomal subunit (SSU). Mature yeast ribosomes consist of a small (40S) and a large (60S) subunit. The 40S small subunit contains 1 molecule of ribosomal RNA (18S rRNA) and at least 33 different proteins. The large 60S subunit contains 3 rRNA molecules (25S, 5.8S and 5S rRNA) and at least 46 different proteins. Interacts with snoRNA U3. uS11 interacts with MPP10. Component of the ribosomal small subunit (SSU) processome composed of at least 40 protein subunits and snoRNA U3.

Its subcellular location is the cytoplasm. Its function is as follows. Component of the ribosome, a large ribonucleoprotein complex responsible for the synthesis of proteins in the cell. The small ribosomal subunit (SSU) binds messenger RNAs (mRNAs) and translates the encoded message by selecting cognate aminoacyl-transfer RNA (tRNA) molecules. The large subunit (LSU) contains the ribosomal catalytic site termed the peptidyl transferase center (PTC), which catalyzes the formation of peptide bonds, thereby polymerizing the amino acids delivered by tRNAs into a polypeptide chain. The nascent polypeptides leave the ribosome through a tunnel in the LSU and interact with protein factors that function in enzymatic processing, targeting, and the membrane insertion of nascent chains at the exit of the ribosomal tunnel. uS4 is involved in nucleolar processing of pre-18S ribosomal RNA and ribosome assembly. The protein is Small ribosomal subunit protein uS4A (rps901) of Schizosaccharomyces pombe (strain 972 / ATCC 24843) (Fission yeast).